A 366-amino-acid chain; its full sequence is 1-deoxy-D-xylulose 5-phosphate reductoisomerase (366 aa).

Residues threonine 7, glycine 8, serine 9, isoleucine 10, glycine 31, lysine 32, asparagine 33, and asparagine 113 each contribute to the NADPH site. A 1-deoxy-D-xylulose 5-phosphate-binding site is contributed by lysine 114. Glutamate 115 contacts NADPH. A Mn(2+)-binding site is contributed by aspartate 133. Residues serine 134, glutamate 135, serine 158, and histidine 181 each coordinate 1-deoxy-D-xylulose 5-phosphate. Residue glutamate 135 coordinates Mn(2+). Residue glycine 187 participates in NADPH binding. 1-deoxy-D-xylulose 5-phosphate is bound by residues serine 194, asparagine 199, lysine 200, and glutamate 203. A Mn(2+)-binding site is contributed by glutamate 203.

The protein belongs to the DXR family. It depends on Mg(2+) as a cofactor. Mn(2+) serves as cofactor.

It carries out the reaction 2-C-methyl-D-erythritol 4-phosphate + NADP(+) = 1-deoxy-D-xylulose 5-phosphate + NADPH + H(+). It functions in the pathway isoprenoid biosynthesis; isopentenyl diphosphate biosynthesis via DXP pathway; isopentenyl diphosphate from 1-deoxy-D-xylulose 5-phosphate: step 1/6. Its function is as follows. Catalyzes the NADPH-dependent rearrangement and reduction of 1-deoxy-D-xylulose-5-phosphate (DXP) to 2-C-methyl-D-erythritol 4-phosphate (MEP). The protein is 1-deoxy-D-xylulose 5-phosphate reductoisomerase of Helicobacter pylori (strain G27).